We begin with the raw amino-acid sequence, 250 residues long: Keratin-associated protein 9-1 (250 aa).

A run of 32 repeats spans residues 8-12, 13-17, 18-22, 37-41, 42-46, 51-55, 56-60, 61-65, 66-70, 75-79, 80-84, 85-89, 90-94, 95-99, 105-109, 114-117, 118-121, 133-137, 138-142, 143-147, 153-157, 162-166, 167-171, 176-180, 185-189, 190-194, 214-218, 219-223, 229-233, 234-238, 239-243, and 244-248. The 32 X 5 AA repeats of C-C-[CGSVRQH]-[SQTNP]-[PTSI] stretch occupies residues 8–248; the sequence is CCQPTCCRTT…CCVSSCCQPS (241 aa).

This sequence belongs to the KRTAP type 9 family. In terms of assembly, interacts with hair keratins.

In the hair cortex, hair keratin intermediate filaments are embedded in an interfilamentous matrix, consisting of hair keratin-associated proteins (KRTAP), which are essential for the formation of a rigid and resistant hair shaft through their extensive disulfide bond cross-linking with abundant cysteine residues of hair keratins. The matrix proteins include the high-sulfur and high-glycine-tyrosine keratins. This is Keratin-associated protein 9-1 from Homo sapiens (Human).